The chain runs to 223 residues: MAMYDDEFDTKASDLTFSPWVEVENWKDVTTRLRAIKFALQADRDKIPGVLSDLKTNCPYSAFKRFPDKSLYSVLSKEAVIAVAQIQSASGFKRRADEKNAVSGLVSVTPTQISQSASSSAATPVGLATVKPPRESDSAFQEDTFSYAKFDDASTAFHKALAYLEGLSLRPTYRRKFEKDMNVKWGGSGSAPSGAPAGGSSGSAPPTSGSSGSGAAPTPPPNP.

2 disordered regions span residues 117 to 136 (ASSS…PRES) and 181 to 223 (MNVK…PPNP). Low complexity predominate over residues 202-216 (GSAPPTSGSSGSGAA).

The protein resides in the virion. In Beta vulgaris (Sugar beet), this protein is Coat protein.